Consider the following 563-residue polypeptide: Eukaryotic translation initiation factor 3 subunit D-1 (563 aa).

A disordered region spans residues 98–167 (VQKPPHQRGR…GPPPKMRESS (70 aa)). Residues 100-121 (KPPHQRGRFRNMRNSRSGRGRN) are compositionally biased toward basic residues. Phosphothreonine is present on Thr-128. The RNA gate stretch occupies residues 291–305 (EFDLLTVNETSVEPP).

Belongs to the eIF-3 subunit D family. As to quaternary structure, component of the eukaryotic translation initiation factor 3 (eIF-3) complex. The eIF-3 complex interacts with pix.

The protein resides in the cytoplasm. MRNA cap-binding component of the eukaryotic translation initiation factor 3 (eIF-3) complex, which is involved in protein synthesis of a specialized repertoire of mRNAs and, together with other initiation factors, stimulates binding of mRNA and methionyl-tRNAi to the 40S ribosome. The eIF-3 complex specifically targets and initiates translation of a subset of mRNAs involved in cell proliferation. In the eIF-3 complex, eif3d specifically recognizes and binds the 7-methylguanosine cap of a subset of mRNAs. The protein is Eukaryotic translation initiation factor 3 subunit D-1 of Drosophila mojavensis (Fruit fly).